We begin with the raw amino-acid sequence, 248 residues long: Proteasome subunit alpha type-7 (248 aa).

Residue serine 130 is glycosylated (O-linked (GlcNAc) serine). Tyrosine 153 bears the Phosphotyrosine mark. Lysine 227 is modified (N6-acetyllysine).

The protein belongs to the peptidase T1A family. In terms of assembly, the 26S proteasome consists of a 20S proteasome core and two 19S regulatory subunits. The 20S proteasome core is a barrel-shaped complex made of 28 subunits that are arranged in four stacked rings. The two outer rings are each formed by seven alpha subunits, and the two inner rings are formed by seven beta subunits. The proteolytic activity is exerted by three beta-subunits PSMB5, PSMB6 and PSMB7. PSMA7 interacts directly with the PSMG1-PSMG2 heterodimer which promotes 20S proteasome assembly. Interacts with HIF1A. Interacts with RAB7A. Interacts with PRKN. Interacts with ABL1 and ABL2. Interacts with EMAP2. Interacts with MAVS.

It is found in the cytoplasm. It localises to the nucleus. In terms of biological role, component of the 20S core proteasome complex involved in the proteolytic degradation of most intracellular proteins. This complex plays numerous essential roles within the cell by associating with different regulatory particles. Associated with two 19S regulatory particles, forms the 26S proteasome and thus participates in the ATP-dependent degradation of ubiquitinated proteins. The 26S proteasome plays a key role in the maintenance of protein homeostasis by removing misfolded or damaged proteins that could impair cellular functions, and by removing proteins whose functions are no longer required. Associated with the PA200 or PA28, the 20S proteasome mediates ubiquitin-independent protein degradation. This type of proteolysis is required in several pathways including spermatogenesis (20S-PA200 complex) or generation of a subset of MHC class I-presented antigenic peptides (20S-PA28 complex). Inhibits the transactivation function of HIF-1A under both normoxic and hypoxia-mimicking conditions. The interaction with EMAP2 increases the proteasome-mediated HIF-1A degradation under the hypoxic conditions. Plays a role in hepatitis C virus internal ribosome entry site-mediated translation. Mediates nuclear translocation of the androgen receptor (AR) and thereby enhances androgen-mediated transactivation. Promotes MAVS degradation and thereby negatively regulates MAVS-mediated innate immune response. In Bos taurus (Bovine), this protein is Proteasome subunit alpha type-7 (PSMA7).